A 156-amino-acid polypeptide reads, in one-letter code: Small ribosomal subunit protein uS7 (156 aa).

Belongs to the universal ribosomal protein uS7 family. In terms of assembly, part of the 30S ribosomal subunit. Contacts proteins S9 and S11.

Its function is as follows. One of the primary rRNA binding proteins, it binds directly to 16S rRNA where it nucleates assembly of the head domain of the 30S subunit. Is located at the subunit interface close to the decoding center, probably blocks exit of the E-site tRNA. The polypeptide is Small ribosomal subunit protein uS7 (Clavibacter sepedonicus (Clavibacter michiganensis subsp. sepedonicus)).